A 141-amino-acid polypeptide reads, in one-letter code: Large ribosomal subunit protein uL16 (141 aa).

The span at 1–17 (MLQPKRTKYRKVQKGRM) shows a compositional bias: basic residues. The segment at 1 to 29 (MLQPKRTKYRKVQKGRMKGNSQRGHELSN) is disordered.

This sequence belongs to the universal ribosomal protein uL16 family. Part of the 50S ribosomal subunit.

Its function is as follows. Binds 23S rRNA and is also seen to make contacts with the A and possibly P site tRNAs. This chain is Large ribosomal subunit protein uL16, found in Flavobacterium johnsoniae (strain ATCC 17061 / DSM 2064 / JCM 8514 / BCRC 14874 / CCUG 350202 / NBRC 14942 / NCIMB 11054 / UW101) (Cytophaga johnsonae).